The primary structure comprises 249 residues: Adapter protein MecA (249 aa).

It belongs to the MecA family. Homodimer.

Its function is as follows. Enables the recognition and targeting of unfolded and aggregated proteins to the ClpC protease or to other proteins involved in proteolysis. The protein is Adapter protein MecA of Streptococcus thermophilus (strain ATCC BAA-491 / LMD-9).